A 307-amino-acid polypeptide reads, in one-letter code: tRNA dimethylallyltransferase (307 aa).

7–14 (GPTAGGKT) contributes to the ATP binding site. 9-14 (TAGGKT) is a substrate binding site. Residues 32-35 (DSRQ) form an interaction with substrate tRNA region.

This sequence belongs to the IPP transferase family. As to quaternary structure, monomer. Mg(2+) serves as cofactor.

The enzyme catalyses adenosine(37) in tRNA + dimethylallyl diphosphate = N(6)-dimethylallyladenosine(37) in tRNA + diphosphate. Catalyzes the transfer of a dimethylallyl group onto the adenine at position 37 in tRNAs that read codons beginning with uridine, leading to the formation of N6-(dimethylallyl)adenosine (i(6)A). The polypeptide is tRNA dimethylallyltransferase (Elusimicrobium minutum (strain Pei191)).